The chain runs to 788 residues: Endonuclease MutS2 (788 aa).

Residue 334 to 341 participates in ATP binding; sequence GPNTGGKT. One can recognise a Smr domain in the interval 713–788; the sequence is LDLRGKRYEE…GNGATVVKFQ (76 aa).

It belongs to the DNA mismatch repair MutS family. MutS2 subfamily. As to quaternary structure, homodimer. Binds to stalled ribosomes, contacting rRNA.

Endonuclease that is involved in the suppression of homologous recombination and thus may have a key role in the control of bacterial genetic diversity. Its function is as follows. Acts as a ribosome collision sensor, splitting the ribosome into its 2 subunits. Detects stalled/collided 70S ribosomes which it binds and splits by an ATP-hydrolysis driven conformational change. Acts upstream of the ribosome quality control system (RQC), a ribosome-associated complex that mediates the extraction of incompletely synthesized nascent chains from stalled ribosomes and their subsequent degradation. Probably generates substrates for RQC. This is Endonuclease MutS2 from Enterococcus faecalis (strain ATCC 700802 / V583).